The sequence spans 503 residues: Major facilitator superfamily domain-containing protein 4A (503 aa).

The next 12 helical transmembrane spans lie at 19–39 (LTYW…GPTL), 53–73 (ITWV…LGGV), 82–102 (LFLL…IPFC), 105–125 (VGVL…IDTI), 139–159 (AIFL…SPLI), 214–234 (YAFW…FYLI), 289–309 (IWNA…TLFM), 338–358 (GYLP…SIPV), 366–386 (SMLF…LLSQ), 392–412 (MFVG…SMLA), 427–447 (VLVT…GSVM), and 455–475 (FLVC…VLLV). Residues 484 to 503 (SEDSACKPPGLDGEATSYQS) are disordered.

This sequence belongs to the major facilitator superfamily.

Its subcellular location is the membrane. The chain is Major facilitator superfamily domain-containing protein 4A (mfsd4a) from Xenopus tropicalis (Western clawed frog).